A 111-amino-acid polypeptide reads, in one-letter code: Large ribosomal subunit protein uL22 (111 aa).

The protein belongs to the universal ribosomal protein uL22 family. Part of the 50S ribosomal subunit.

In terms of biological role, this protein binds specifically to 23S rRNA; its binding is stimulated by other ribosomal proteins, e.g. L4, L17, and L20. It is important during the early stages of 50S assembly. It makes multiple contacts with different domains of the 23S rRNA in the assembled 50S subunit and ribosome. Functionally, the globular domain of the protein is located near the polypeptide exit tunnel on the outside of the subunit, while an extended beta-hairpin is found that lines the wall of the exit tunnel in the center of the 70S ribosome. In Xylella fastidiosa (strain 9a5c), this protein is Large ribosomal subunit protein uL22.